A 197-amino-acid polypeptide reads, in one-letter code: NADH-quinone oxidoreductase subunit C (197 aa).

It belongs to the complex I 30 kDa subunit family. In terms of assembly, NDH-1 is composed of 14 different subunits. Subunits NuoB, C, D, E, F, and G constitute the peripheral sector of the complex.

Its subcellular location is the cell inner membrane. It catalyses the reaction a quinone + NADH + 5 H(+)(in) = a quinol + NAD(+) + 4 H(+)(out). Its function is as follows. NDH-1 shuttles electrons from NADH, via FMN and iron-sulfur (Fe-S) centers, to quinones in the respiratory chain. The immediate electron acceptor for the enzyme in this species is believed to be ubiquinone. Couples the redox reaction to proton translocation (for every two electrons transferred, four hydrogen ions are translocated across the cytoplasmic membrane), and thus conserves the redox energy in a proton gradient. The protein is NADH-quinone oxidoreductase subunit C of Rickettsia prowazekii (strain Madrid E).